Consider the following 533-residue polypeptide: UDP-glucuronosyltransferase 1-2 (533 aa).

Positions 1 to 27 (MDTGLCVPLRGISGLLLLLCALPWAEG) are cleaved as a signal peptide. Residues asparagine 141, asparagine 295, and asparagine 433 are each glycosylated (N-linked (GlcNAc...) asparagine). Residues 491–511 (VIGFLLAIVLTVVFIVFKCCA) form a helical membrane-spanning segment.

It belongs to the UDP-glycosyltransferase family. In terms of tissue distribution, expressed in kidney.

It is found in the microsome. It localises to the endoplasmic reticulum membrane. The enzyme catalyses glucuronate acceptor + UDP-alpha-D-glucuronate = acceptor beta-D-glucuronoside + UDP + H(+). Functionally, UDPGT is of major importance in the conjugation and subsequent elimination of potentially toxic xenobiotics and endogenous compounds. In Mus musculus (Mouse), this protein is UDP-glucuronosyltransferase 1-2 (Ugt1a2).